Here is a 104-residue protein sequence, read N- to C-terminus: MDKSKRLFLKSKRSFRRRLPPIPSGDRIDYRNMSLISRFISEQGKILSRRVNRLTLKQQRLITIAIKQARILSLLPFLNNDKNDKQFERSESTPRTIGLRTRNK.

The interval 84 to 104 (DKQFERSESTPRTIGLRTRNK) is disordered.

The protein belongs to the bacterial ribosomal protein bS18 family. In terms of assembly, part of the 30S ribosomal subunit.

Its subcellular location is the plastid. It is found in the chloroplast. The sequence is that of Small ribosomal subunit protein bS18c from Cucumis sativus (Cucumber).